Here is a 152-residue protein sequence, read N- to C-terminus: Ubiquitin-conjugating enzyme E2 N (152 aa).

The UBC core domain occupies 3–149 (GLPRRIIKET…ARAWTRLYAM (147 aa)). An N6-acetyllysine modification is found at Lys82. Catalysis depends on Cys87, which acts as the Glycyl thioester intermediate. Lys92 participates in a covalent cross-link: Glycyl lysine isopeptide (Lys-Gly) (interchain with G-Cter in ISG15).

It belongs to the ubiquitin-conjugating enzyme family. Heterodimer with UBE2V2. Interacts (UBE2V2-UBE2N heterodimer) with the E3 ligase STUB1 (via the U-box domain); the complex has a specific 'Lys-63'-linked polyubiquitination activity. Interacts with RNF8 and RNF168. Interacts with RNF11. Interacts with the E3 ligases, HLTF and SHPRH; the interactions promote the 'Lys-63'-linked polyubiquitination of PCNA upon genotoxic stress and lead to DNA repair. Interacts with ARIH2 (via RING-type 2). Interacts with OTUB1; leading to inhibit E2-conjugating activity. Interacts with RIGI and RNF135; involved in RIGI ubiquitination and activation. Post-translationally, conjugation to ISG15 impairs formation of the thioester bond with ubiquitin but not interaction with UBE2V2.

It catalyses the reaction S-ubiquitinyl-[E1 ubiquitin-activating enzyme]-L-cysteine + [E2 ubiquitin-conjugating enzyme]-L-cysteine = [E1 ubiquitin-activating enzyme]-L-cysteine + S-ubiquitinyl-[E2 ubiquitin-conjugating enzyme]-L-cysteine.. It functions in the pathway protein modification; protein ubiquitination. With respect to regulation, activity is inhibited by binding to OTUB1, which prevents 'Lys-63'-linked polyubiquitination. Its function is as follows. The UBE2V1-UBE2N and UBE2V2-UBE2N heterodimers catalyze the synthesis of non-canonical 'Lys-63'-linked polyubiquitin chains. This type of polyubiquitination does not lead to protein degradation by the proteasome. Mediates transcriptional activation of target genes. Plays a role in the control of progress through the cell cycle and differentiation. Plays a role in the error-free DNA repair pathway and contributes to the survival of cells after DNA damage. Acts together with the E3 ligases, HLTF and SHPRH, in the 'Lys-63'-linked poly-ubiquitination of PCNA upon genotoxic stress, which is required for DNA repair. Appears to act together with E3 ligase RNF5 in the 'Lys-63'-linked polyubiquitination of JKAMP thereby regulating JKAMP function by decreasing its association with components of the proteasome and ERAD. Promotes TRIM5 capsid-specific restriction activity and the UBE2V1-UBE2N heterodimer acts in concert with TRIM5 to generate 'Lys-63'-linked polyubiquitin chains which activate the MAP3K7/TAK1 complex which in turn results in the induction and expression of NF-kappa-B and MAPK-responsive inflammatory genes. Together with RNF135 and UB2V1, catalyzes the viral RNA-dependent 'Lys-63'-linked polyubiquitination of RIGI to activate the downstream signaling pathway that leads to interferon beta production. UBE2V1-UBE2N together with TRAF3IP2 E3 ubiquitin ligase mediate 'Lys-63'-linked polyubiquitination of TRAF6, a component of IL17A-mediated signaling pathway. This chain is Ubiquitin-conjugating enzyme E2 N (UBE2N), found in Macaca fascicularis (Crab-eating macaque).